A 571-amino-acid chain; its full sequence is Proline--tRNA ligase (571 aa).

It belongs to the class-II aminoacyl-tRNA synthetase family. ProS type 1 subfamily. As to quaternary structure, homodimer.

It localises to the cytoplasm. It catalyses the reaction tRNA(Pro) + L-proline + ATP = L-prolyl-tRNA(Pro) + AMP + diphosphate. In terms of biological role, catalyzes the attachment of proline to tRNA(Pro) in a two-step reaction: proline is first activated by ATP to form Pro-AMP and then transferred to the acceptor end of tRNA(Pro). As ProRS can inadvertently accommodate and process non-cognate amino acids such as alanine and cysteine, to avoid such errors it has two additional distinct editing activities against alanine. One activity is designated as 'pretransfer' editing and involves the tRNA(Pro)-independent hydrolysis of activated Ala-AMP. The other activity is designated 'posttransfer' editing and involves deacylation of mischarged Ala-tRNA(Pro). The misacylated Cys-tRNA(Pro) is not edited by ProRS. In Histophilus somni (strain 129Pt) (Haemophilus somnus), this protein is Proline--tRNA ligase.